Reading from the N-terminus, the 406-residue chain is 1H-pyrrole-2-carbonyl-[peptidyl-carrier protein] brominase (406 aa).

FAD-binding residues include alanine 17, glutamate 36, arginine 42, histidine 44, isoleucine 45, serine 48, arginine 101, valine 124, aspartate 291, and valine 304.

This sequence belongs to the flavin-dependent halogenase family.

The enzyme catalyses (1H-pyrrole-2-carbonyl)-[peptidyl-carrier protein] + 3 bromide + 3 FADH2 + 3 O2 = (3,4,5-tribromo-1H-pyrrole-2-carbonyl)-[peptidyl-carrier protein] + 3 FAD + 6 H2O. The catalysed reaction is (1H-pyrrole-2-carbonyl)-[peptidyl-carrier protein] + bromide + FADH2 + O2 = (5-bromo-1H-pyrrole-2-carbonyl)-[peptidyl-carrier protein] + FAD + 2 H2O. It carries out the reaction (5-bromo-1H-pyrrole-2-carbonyl)-[peptidyl-carrier protein] + bromide + FADH2 + O2 = (4,5-dibromo-1H-pyrrole-2-carbonyl)-[peptidyl-carrier protein] + FAD + 2 H2O. It catalyses the reaction (4,5-dibromo-1H-pyrrole-2-carbonyl)-[peptidyl-carrier protein] + bromide + FADH2 + O2 = (3,4,5-tribromo-1H-pyrrole-2-carbonyl)-[peptidyl-carrier protein] + FAD + 2 H2O. Functionally, brominase involved in the biosynthesis of polybrominated aromatic organic compounds. Catalyzes three successive rounds of bromination of pyrrolyl-S-Bmp1 to produce mono-, di- and tribromopyrrolyl-S-Bmp1. The protein is 1H-pyrrole-2-carbonyl-[peptidyl-carrier protein] brominase of Pseudoalteromonas luteoviolacea (strain 2ta16).